The following is a 675-amino-acid chain: Probable potassium transport system protein Kup (675 aa).

12 consecutive transmembrane segments (helical) span residues Leu-12 to Val-32, Val-55 to Leu-75, Trp-98 to Pro-118, Trp-143 to Gly-163, Ser-170 to Ile-190, Met-216 to Ser-236, Thr-249 to Leu-269, Ile-296 to Gly-316, Ile-345 to Phe-365, Ala-374 to Val-394, Phe-401 to Ser-421, and Gly-428 to Phe-448.

This sequence belongs to the HAK/KUP transporter (TC 2.A.72) family.

The protein resides in the cell membrane. The catalysed reaction is K(+)(in) + H(+)(in) = K(+)(out) + H(+)(out). In terms of biological role, transport of potassium into the cell. Likely operates as a K(+):H(+) symporter. This is Probable potassium transport system protein Kup from Levilactobacillus brevis (strain ATCC 367 / BCRC 12310 / CIP 105137 / JCM 1170 / LMG 11437 / NCIMB 947 / NCTC 947) (Lactobacillus brevis).